A 217-amino-acid chain; its full sequence is UPF0193 protein EVG1 (217 aa).

The protein belongs to the UPF0193 (EVG1) family.

The chain is UPF0193 protein EVG1 (C22orf23) from Homo sapiens (Human).